The following is a 258-amino-acid chain: 5'-nucleotidase SurE (258 aa).

A divalent metal cation-binding residues include Asp-9, Asp-10, Ser-42, and Asn-96.

The protein belongs to the SurE nucleotidase family. A divalent metal cation is required as a cofactor.

It localises to the cytoplasm. It catalyses the reaction a ribonucleoside 5'-phosphate + H2O = a ribonucleoside + phosphate. In terms of biological role, nucleotidase that shows phosphatase activity on nucleoside 5'-monophosphates. The chain is 5'-nucleotidase SurE from Campylobacter jejuni subsp. doylei (strain ATCC BAA-1458 / RM4099 / 269.97).